The primary structure comprises 365 residues: MIKFLSALILLLVITAAQAERIRDLTSVQGVRQNSLIGYGLVVGLDGTGDQTTQTPFTTQTLNNMLSQLGITVPTGTNMQLKNVAAVMVTASLPPFGRQGQTIDVVVSSMGNAKSLRGGTLLMTPLKGVDSQVYALAQGNILVGGAGASAGGSSVQVNQLNGGRITNGAVIERELPSQFGVGNTLNLQLNDEDFSMAQQIADTINRVRGYGSATALDARTIQVRVPSGNSSQVRFLADIQNMQVNVTPQDAKVVINSRTGSVVMNREVTLDSCAVAQGNLSVTVNRQANVSQPDTPFGGGQTVVTPQTQIDLRQSGGSLQSVRSSASLNNVVRALNALGATPMDLMSILQSMQSAGCLRAKLEII.

Positions 1–19 (MIKFLSALILLLVITAAQA) are cleaved as a signal peptide.

It belongs to the FlgI family. The basal body constitutes a major portion of the flagellar organelle and consists of four rings (L,P,S, and M) mounted on a central rod.

The protein resides in the periplasm. The protein localises to the bacterial flagellum basal body. Its function is as follows. Assembles around the rod to form the L-ring and probably protects the motor/basal body from shearing forces during rotation. The polypeptide is Flagellar P-ring protein (Escherichia coli O81 (strain ED1a)).